Consider the following 340-residue polypeptide: Geranylgeranyl pyrophosphate synthase atmG (340 aa).

Residues 19–48 (NLDASYPTSSSLSTEPIDTRSSSPQGSAST) are compositionally biased toward polar residues. The tract at residues 19 to 51 (NLDASYPTSSSLSTEPIDTRSSSPQGSASTPVD) is disordered. The isopentenyl diphosphate site is built by lysine 69, arginine 72, and histidine 101. Positions 108 and 112 each coordinate Mg(2+). Arginine 117 serves as a coordination point for dimethylallyl diphosphate. Arginine 118 contacts isopentenyl diphosphate. Residues lysine 195, threonine 196, and glutamine 229 each coordinate dimethylallyl diphosphate. Residue aspartate 232 coordinates Mg(2+). 3 residues coordinate dimethylallyl diphosphate: asparagine 236, lysine 246, and lysine 256.

The protein belongs to the FPP/GGPP synthase family. It depends on Mg(2+) as a cofactor.

It carries out the reaction isopentenyl diphosphate + dimethylallyl diphosphate = (2E)-geranyl diphosphate + diphosphate. The catalysed reaction is isopentenyl diphosphate + (2E)-geranyl diphosphate = (2E,6E)-farnesyl diphosphate + diphosphate. It catalyses the reaction isopentenyl diphosphate + (2E,6E)-farnesyl diphosphate = (2E,6E,10E)-geranylgeranyl diphosphate + diphosphate. In terms of biological role, geranylgeranyl pyrophosphate synthase; part of the ATM1 gene cluster that mediates the biosynthesis of aflatrem, a tremorgenic mycotoxin with acute neurotoxic effects. Synthesis of geranylgeranyl diphosphate (GGPP) by AtmG (a GGPP synthase) precedes condensation of GGPP with indole 3-glycerol phosphate, followed by epoxidation and cyclization by AtmM (a FAD-dependent monooxygenase) and AtmC (a prenyltransferase) to produce paspaline. AtmB is also essential for paspaline production, but its exact role has not been identified yet. AtmP, a cytochrome P450 monooxygenase, subsequently converts paspaline to 13-desoxypaxilline via PC-M6 by removal of the C-30 methyl group and oxidation at C-10. AtmQ, a cytochrome P450 monooxygenase, then catalyzes the oxidation of 13-desoxypaxilline, first at C-7 to produce paspalicine and then at C-13 to form paspalinine. Finally, AtmD prenylates paspalinine to form aflatrem. The chain is Geranylgeranyl pyrophosphate synthase atmG from Aspergillus flavus.